A 311-amino-acid polypeptide reads, in one-letter code: Ribosomal RNA small subunit methyltransferase A (311 aa).

Residues Asn-29, Val-31, Gly-56, Glu-77, Asp-107, and Asn-126 each coordinate S-adenosyl-L-methionine.

Belongs to the class I-like SAM-binding methyltransferase superfamily. rRNA adenine N(6)-methyltransferase family. RsmA subfamily.

It localises to the cytoplasm. The enzyme catalyses adenosine(1518)/adenosine(1519) in 16S rRNA + 4 S-adenosyl-L-methionine = N(6)-dimethyladenosine(1518)/N(6)-dimethyladenosine(1519) in 16S rRNA + 4 S-adenosyl-L-homocysteine + 4 H(+). Functionally, specifically dimethylates two adjacent adenosines (A1518 and A1519) in the loop of a conserved hairpin near the 3'-end of 16S rRNA in the 30S particle. May play a critical role in biogenesis of 30S subunits. The chain is Ribosomal RNA small subunit methyltransferase A from Mycolicibacterium vanbaalenii (strain DSM 7251 / JCM 13017 / BCRC 16820 / KCTC 9966 / NRRL B-24157 / PYR-1) (Mycobacterium vanbaalenii).